A 763-amino-acid polypeptide reads, in one-letter code: MKKNGDGSSPKSPDGVVSRSARSSFRALSNCLKVISSGASTVARSAVSAASSAVESHHDQVLWAGFDNLQKEDGDTRRVLLLAFKSGFQVWDVEDTENVHVIVSAHDGQAFFMQMLLNPINSGVLDDRFYKSRPLLAVCGDYSSKKISSDNPGSETVATPTNVYVYSLKSQSYVHTLKFRATIYSVRCCSRIVAVLQAAQIDCFDAATLEMDYRIVTNSIVCGSLGVGYGPLAVGPRWIAYSGSRIATSSSAIFTSEIVSLSTSSPSVAQFARDSSKQLASGIANLGDKGYRSLTKYCSEVLPNPYIPGLKGIGVGNEKVADAESIGMVIVKDITNKSVITQFKAHKSPISALCFDQSGLLLVTASIQGHNINVFRIMPTISTSRAVKTTTFAHLFRLQRGFTNAVIQDICFSKDSNLIVVGSSRGTSHLFEINPEKEGDAPVPMSAISRIRSGNSSGWIGTVSGAASAAAGMVAGSVPGTVTSTFCYCDEKSNNNYYGSVADMCSKTNLLVFAPSGCMTQYALREHQVGVGHETAAMTGFDSESGLETEGKLAVDPIRRWSMIQNQSRRETHDPHSDIYGGGTSVDSKSKVFPEVVRKQSVEEAWKVSKKGTTRVVDKRHLYIYEAEQQQTHLPTQLPLWARRKFRFQELVLNRGEEISGGGGREMEIEGIQTRTIEARTRDLVPVWGYLQSPRSQQVINESIQSPSTTTQDDKVATLEGHGTETDLGAVHSEEQTQSEPVDKEGIAEEKNHSEDEDEEQVD.

WD repeat units follow at residues 345-385 (AHKS…STSR) and 402-441 (FTNA…EGDA). Positions 701 to 711 (NESIQSPSTTT) are enriched in polar residues. The disordered stretch occupies residues 701-763 (NESIQSPSTT…SEDEDEEQVD (63 aa)). Composition is skewed to basic and acidic residues over residues 712-725 (QDDK…HGTE) and 741-754 (PVDK…KNHS).

The protein belongs to the WD repeat PROPPIN family. As to quaternary structure, component of the PI(3,5)P2 regulatory complex at least composed of ATG18, SAC/FIG4, FAB1 and VAC14. As to expression, expressed in roots, flowers and leaves.

Its subcellular location is the preautophagosomal structure membrane. It is found in the vacuole membrane. In terms of biological role, the PI(3,5)P2 regulatory complex regulates both the synthesis and turnover of phosphatidylinositol 3,5-bisphosphate (PtdIns(3,5)P2). Required for autophagy. The chain is Autophagy-related protein 18f (ATG18F) from Arabidopsis thaliana (Mouse-ear cress).